The following is a 134-amino-acid chain: Small ribosomal subunit protein uS8c (134 aa).

The protein belongs to the universal ribosomal protein uS8 family. As to quaternary structure, part of the 30S ribosomal subunit.

The protein resides in the plastid. Its subcellular location is the chloroplast. Its function is as follows. One of the primary rRNA binding proteins, it binds directly to 16S rRNA central domain where it helps coordinate assembly of the platform of the 30S subunit. This is Small ribosomal subunit protein uS8c (rps8) from Chloranthus spicatus (Chulantree).